We begin with the raw amino-acid sequence, 80 residues long: uncharacterized protein (80 aa).

This is an uncharacterized protein from Lepidoptera (butterflies and moths).